The sequence spans 366 residues: Ribosomal RNA large subunit methyltransferase M (366 aa).

Residues S188, 221–224, D240, D260, and D277 contribute to the S-adenosyl-L-methionine site; that span reads CPGG. The active-site Proton acceptor is the K306.

The protein belongs to the class I-like SAM-binding methyltransferase superfamily. RNA methyltransferase RlmE family. RlmM subfamily. Monomer.

The protein resides in the cytoplasm. It carries out the reaction cytidine(2498) in 23S rRNA + S-adenosyl-L-methionine = 2'-O-methylcytidine(2498) in 23S rRNA + S-adenosyl-L-homocysteine + H(+). Its function is as follows. Catalyzes the 2'-O-methylation at nucleotide C2498 in 23S rRNA. This chain is Ribosomal RNA large subunit methyltransferase M, found in Erwinia tasmaniensis (strain DSM 17950 / CFBP 7177 / CIP 109463 / NCPPB 4357 / Et1/99).